A 79-amino-acid polypeptide reads, in one-letter code: Putative defensin-like protein 80 (79 aa).

Positions 1-26 (MDVQRSSYIFIALSIIAMFLITGVKP) are cleaved as a signal peptide. 4 cysteine pairs are disulfide-bonded: C32/C65, C36/C58, C44/C63, and C48/C64.

Belongs to the DEFL family.

Its subcellular location is the secreted. This is Putative defensin-like protein 80 (LCR81) from Arabidopsis thaliana (Mouse-ear cress).